The sequence spans 442 residues: 3-phosphoshikimate 1-carboxyvinyltransferase (442 aa).

The 3-phosphoshikimate site is built by lysine 25, serine 26, and arginine 30. Position 25 (lysine 25) interacts with phosphoenolpyruvate. Phosphoenolpyruvate is bound by residues glycine 96 and arginine 124. Positions 171, 172, 173, 203, 325, and 352 each coordinate 3-phosphoshikimate. Residue glutamine 173 participates in phosphoenolpyruvate binding. Aspartate 325 serves as the catalytic Proton acceptor. 3 residues coordinate phosphoenolpyruvate: arginine 356, arginine 400, and lysine 425.

This sequence belongs to the EPSP synthase family. As to quaternary structure, monomer.

The protein localises to the cytoplasm. The catalysed reaction is 3-phosphoshikimate + phosphoenolpyruvate = 5-O-(1-carboxyvinyl)-3-phosphoshikimate + phosphate. The protein operates within metabolic intermediate biosynthesis; chorismate biosynthesis; chorismate from D-erythrose 4-phosphate and phosphoenolpyruvate: step 6/7. Functionally, catalyzes the transfer of the enolpyruvyl moiety of phosphoenolpyruvate (PEP) to the 5-hydroxyl of shikimate-3-phosphate (S3P) to produce enolpyruvyl shikimate-3-phosphate and inorganic phosphate. The protein is 3-phosphoshikimate 1-carboxyvinyltransferase of Bordetella parapertussis (strain 12822 / ATCC BAA-587 / NCTC 13253).